We begin with the raw amino-acid sequence, 195 residues long: MTKIETLVERARRLKEKGLTTEEIADELNVSRETALWLITRVGETPPSDIYVEWRELTKPSRLRLVAMAMADMIVSEVKEDIEVVVGIATSGIPLAAMVAEELGCEFTIYYPRKFKTDEEKPKGGILSENFARVSGKKCAIVDDITSTGRSIKEAIEVIEANDGKAVCAAVIVNKRGGNEIEGIPLLSMLKILRI.

Belongs to the purine/pyrimidine phosphoribosyltransferase family. GfcR subfamily.

This is Transcriptional regulator GfcR from Archaeoglobus fulgidus (strain ATCC 49558 / DSM 4304 / JCM 9628 / NBRC 100126 / VC-16).